Reading from the N-terminus, the 333-residue chain is Ketol-acid reductoisomerase (NADP(+)) (333 aa).

The KARI N-terminal Rossmann domain maps to 2-182 (AKIYYDEDAS…GATRAGVIET (181 aa)). NADP(+) is bound by residues 25–28 (YGSQ), Ser51, Ser53, and 83–86 (DTVQ). His108 is a catalytic residue. Gly134 is an NADP(+) binding site. In terms of domain architecture, KARI C-terminal knotted spans 183–327 (TFKEETETDL…EELRKMMPWL (145 aa)). Mg(2+) is bound by residues Asp191, Glu195, Glu227, and Glu231. Ser252 serves as a coordination point for substrate.

The protein belongs to the ketol-acid reductoisomerase family. The cofactor is Mg(2+).

It carries out the reaction (2R)-2,3-dihydroxy-3-methylbutanoate + NADP(+) = (2S)-2-acetolactate + NADPH + H(+). The enzyme catalyses (2R,3R)-2,3-dihydroxy-3-methylpentanoate + NADP(+) = (S)-2-ethyl-2-hydroxy-3-oxobutanoate + NADPH + H(+). Its pathway is amino-acid biosynthesis; L-isoleucine biosynthesis; L-isoleucine from 2-oxobutanoate: step 2/4. It functions in the pathway amino-acid biosynthesis; L-valine biosynthesis; L-valine from pyruvate: step 2/4. In terms of biological role, involved in the biosynthesis of branched-chain amino acids (BCAA). Catalyzes an alkyl-migration followed by a ketol-acid reduction of (S)-2-acetolactate (S2AL) to yield (R)-2,3-dihydroxy-isovalerate. In the isomerase reaction, S2AL is rearranged via a Mg-dependent methyl migration to produce 3-hydroxy-3-methyl-2-ketobutyrate (HMKB). In the reductase reaction, this 2-ketoacid undergoes a metal-dependent reduction by NADPH to yield (R)-2,3-dihydroxy-isovalerate. This is Ketol-acid reductoisomerase (NADP(+)) from Aquifex aeolicus (strain VF5).